Here is a 481-residue protein sequence, read N- to C-terminus: Aspartyl/glutamyl-tRNA(Asn/Gln) amidotransferase subunit B (481 aa).

It belongs to the GatB/GatE family. GatB subfamily. Heterotrimer of A, B and C subunits.

It catalyses the reaction L-glutamyl-tRNA(Gln) + L-glutamine + ATP + H2O = L-glutaminyl-tRNA(Gln) + L-glutamate + ADP + phosphate + H(+). The catalysed reaction is L-aspartyl-tRNA(Asn) + L-glutamine + ATP + H2O = L-asparaginyl-tRNA(Asn) + L-glutamate + ADP + phosphate + 2 H(+). In terms of biological role, allows the formation of correctly charged Asn-tRNA(Asn) or Gln-tRNA(Gln) through the transamidation of misacylated Asp-tRNA(Asn) or Glu-tRNA(Gln) in organisms which lack either or both of asparaginyl-tRNA or glutaminyl-tRNA synthetases. The reaction takes place in the presence of glutamine and ATP through an activated phospho-Asp-tRNA(Asn) or phospho-Glu-tRNA(Gln). This chain is Aspartyl/glutamyl-tRNA(Asn/Gln) amidotransferase subunit B, found in Ehrlichia ruminantium (strain Gardel).